A 677-amino-acid polypeptide reads, in one-letter code: Methionine--tRNA ligase (677 aa).

The short motif at 15 to 25 (PYANGSIHLGH) is the 'HIGH' region element. The Zn(2+) site is built by Cys-146, Cys-149, Cys-159, and Cys-162. The 'KMSKS' region signature appears at 333 to 337 (KMSKS). Lys-336 lines the ATP pocket. One can recognise a tRNA-binding domain in the interval 575–677 (DFAKVDLRVA…DGAKPGQQVK (103 aa)).

The protein belongs to the class-I aminoacyl-tRNA synthetase family. MetG type 1 subfamily. In terms of assembly, homodimer. Zn(2+) serves as cofactor.

It localises to the cytoplasm. It carries out the reaction tRNA(Met) + L-methionine + ATP = L-methionyl-tRNA(Met) + AMP + diphosphate. Is required not only for elongation of protein synthesis but also for the initiation of all mRNA translation through initiator tRNA(fMet) aminoacylation. In Salmonella arizonae (strain ATCC BAA-731 / CDC346-86 / RSK2980), this protein is Methionine--tRNA ligase.